The sequence spans 451 residues: Glucose-6-phosphate isomerase (451 aa).

The Proton donor role is filled by Glu291. Active-site residues include His312 and Lys426.

This sequence belongs to the GPI family.

The protein localises to the cytoplasm. The enzyme catalyses alpha-D-glucose 6-phosphate = beta-D-fructose 6-phosphate. Its pathway is carbohydrate biosynthesis; gluconeogenesis. The protein operates within carbohydrate degradation; glycolysis; D-glyceraldehyde 3-phosphate and glycerone phosphate from D-glucose: step 2/4. Its function is as follows. Catalyzes the reversible isomerization of glucose-6-phosphate to fructose-6-phosphate. The sequence is that of Glucose-6-phosphate isomerase from Caldanaerobacter subterraneus subsp. tengcongensis (strain DSM 15242 / JCM 11007 / NBRC 100824 / MB4) (Thermoanaerobacter tengcongensis).